The following is a 41-amino-acid chain: MKIKNSLKALRERHRNNRMVRRKGRVYILNKTNPRFRARQG.

It belongs to the bacterial ribosomal protein bL36 family.

This chain is Large ribosomal subunit protein bL36, found in Bartonella quintana (strain Toulouse) (Rochalimaea quintana).